Reading from the N-terminus, the 52-residue chain is uncharacterized protein (52 aa).

Residues 1 to 52 (MFGFIYRDPSPAPQGKIRDGSKDPKTPGGGGGGGGGISPNGGAPLGGKGFSM) form a disordered region. Over residues 16–25 (KIRDGSKDPK) the composition is skewed to basic and acidic residues. Positions 27–52 (PGGGGGGGGGISPNGGAPLGGKGFSM) are enriched in gly residues.

This is an uncharacterized protein from Dictyostelium discoideum (Social amoeba).